The sequence spans 400 residues: uncharacterized protein (400 aa).

The segment covering 112–126 (SESTAQIEKKPRKPL) has biased composition (basic and acidic residues). The interval 112 to 151 (SESTAQIEKKPRKPLDSVGLLEGDRNKRKKSPQMNDFNIK) is disordered.

This is an uncharacterized protein from Homo sapiens (Human).